We begin with the raw amino-acid sequence, 336 residues long: MEEETCLDCKRPTIMVVDHSSGDTICSECGLVLEAHIIEYSQEWRTFASDDNHSDRDPNRVGAATNPFLKSGDLVTIIEKPKETASSVLSKDDISTLFRAHNQVKNHEEDLIKQAFEEIQRMTDALDLDIVINSRACEIVSKYDGHANTKLRRGKKLNAICAASVSTACRELQLSRTLKEIAEVANGVDKKDIRKESLVIKRVLESHQTSVSASQAIINTGELVRRFCSKLDISQREIMAIPEAVEKAENFDIRRNPKSVLAAIIFMISHISQTNRKPIREIGIVAEVVENTIKNSVKDMYPYALKIIPNWYACESDIIKRLDGVITSWDSAKFSV.

The segment at 2–34 (EEETCLDCKRPTIMVVDHSSGDTICSECGLVLE) adopts a TFIIB-type zinc-finger fold. C6, C9, C26, and C29 together coordinate Zn(2+).

In terms of tissue distribution, specifically expressed in reproductive organs and seeds.

The protein localises to the nucleus. In terms of biological role, plant-specific TFIIB-related protein involved in the regulation of endosperm proliferation during the syncytial phase of endosperm development. Does not contribute to RNA polymerase IV or V activities in reproductive tissues. In Arabidopsis thaliana (Mouse-ear cress), this protein is Plant-specific TFIIB-related protein 2.